The chain runs to 206 residues: Small ribosomal subunit protein uS4A (206 aa).

The region spanning 98-163 (MRLDNVVYRL…SERFKMFAEN (66 aa)) is the S4 RNA-binding domain.

It belongs to the universal ribosomal protein uS4 family. Part of the 30S ribosomal subunit. Contacts protein S5. The interaction surface between S4 and S5 is involved in control of translational fidelity.

In terms of biological role, one of the primary rRNA binding proteins, it binds directly to 16S rRNA where it nucleates assembly of the body of the 30S subunit. With S5 and S12 plays an important role in translational accuracy. In Clostridium perfringens (strain ATCC 13124 / DSM 756 / JCM 1290 / NCIMB 6125 / NCTC 8237 / Type A), this protein is Small ribosomal subunit protein uS4A.